The following is a 526-amino-acid chain: Cytochrome P450 monooxygenase COX2 (526 aa).

N11 carries an N-linked (GlcNAc...) asparagine glycan. The chain crosses the membrane as a helical span at residues 12-31 (ITTNHVAAAVCAGIAVYAIV). N302 carries an N-linked (GlcNAc...) asparagine glycan. Heme is bound at residue C450.

The protein belongs to the cytochrome P450 family. Heme is required as a cofactor.

The protein resides in the membrane. It functions in the pathway secondary metabolite biosynthesis. Functionally, cytochrome P450 monooxygenase; part of the gene cluster that mediates the biosynthesis of alpha-cuprenene and oxidized derivatives. The alpha-cuprenene synthase COP6 is the only sesquiterpene synthase identified in C.cinereus that appears to be part of a biosynthetic gene cluster and is highly specific since it catalyzes the cyclization of (2E,6E)-farnesyl diphosphate into only one product, alpha-cuprenene. The cytochrome P450 monooxygenase COX2 then oxidizes the cyclohexadiene ring of alpha-cuprenene at positions 1 and 4, yielding first alpha-cuparene, followed by alpha-cuparophenol and a further yet unidentified compound resulting from one additional oxidation step. The cytochrome P450 monooxygenase COX1 then likely catalyzes the oxidation at position 9 of the pentane ring of alpha-cuprenene to give the corresponding hydroxy or ketone derivatives. The sequence is that of Cytochrome P450 monooxygenase COX2 from Coprinopsis cinerea (strain Okayama-7 / 130 / ATCC MYA-4618 / FGSC 9003) (Inky cap fungus).